Reading from the N-terminus, the 423-residue chain is Serine hydroxymethyltransferase (423 aa).

121-123 lines the (6S)-5,6,7,8-tetrahydrofolate pocket; it reads GHI. Residue Lys227 is modified to N6-(pyridoxal phosphate)lysine. Glu242 is a binding site for (6S)-5,6,7,8-tetrahydrofolate.

The protein belongs to the SHMT family. As to quaternary structure, homodimer. It depends on pyridoxal 5'-phosphate as a cofactor.

The protein resides in the cytoplasm. It carries out the reaction 5,10-methylenetetrahydromethanopterin + glycine + H2O = 5,6,7,8-tetrahydromethanopterin + L-serine. The protein operates within amino-acid biosynthesis; glycine biosynthesis; glycine from L-serine: step 1/1. Catalyzes the reversible interconversion of serine and glycine with tetrahydromethanopterin (H4MPT) serving as the one-carbon carrier. Cannot use tetrahydrofolate (THF or H4PteGlu) instead of H4MPT as the pteridine substrate. Also probably exhibits a pteridine-independent aldolase activity toward beta-hydroxyamino acids, producing glycine and aldehydes, via a retro-aldol mechanism. The chain is Serine hydroxymethyltransferase from Methanothermobacter thermautotrophicus (strain ATCC 29096 / DSM 1053 / JCM 10044 / NBRC 100330 / Delta H) (Methanobacterium thermoautotrophicum).